The chain runs to 170 residues: Translocon-associated protein subunit gamma (170 aa).

At 1-24 (MAEVDEFSAFRHENDVSIEQRIVY) the chain is on the lumenal side. Residues 25-45 (FINSLIVALVPVYLYHAIFFM) traverse the membrane as a helical segment. The Cytoplasmic portion of the chain corresponds to 46–51 (SIDDHM). Residues 52–72 (IIYGSVTLFAAIVLTFAYNNI) form a helical membrane-spanning segment. The Lumenal portion of the chain corresponds to 73–121 (YRMKRLKLSASREHISIASKNKVGDKKKFAAAQKEVQALVTSHEAIAAS). A helical membrane pass occupies residues 122 to 141 (IMYNNAVFLICVSIFSFIIF). At 142-145 (KNVP) the chain is on the cytoplasmic side. The chain crosses the membrane as a helical span at residues 146–168 (LVYNYIISISLGAGLTSFLSTSS).

Belongs to the TRAP-gamma family. In terms of assembly, heterotrimer of TRAP-alpha, TRAP-beta and TRAP-gamma.

It localises to the endoplasmic reticulum membrane. TRAP proteins are part of a complex whose function is to bind calcium to the ER membrane and thereby regulate the retention of ER resident proteins. The polypeptide is Translocon-associated protein subunit gamma (ssr3) (Dictyostelium discoideum (Social amoeba)).